A 233-amino-acid polypeptide reads, in one-letter code: 7-cyano-7-deazaguanine synthase (233 aa).

Residue 7 to 17 coordinates ATP; the sequence is LSGGLDSLVTS. Zn(2+) contacts are provided by Cys-195, Cys-206, Cys-209, and Cys-212.

It belongs to the QueC family. Zn(2+) is required as a cofactor.

It carries out the reaction 7-carboxy-7-deazaguanine + NH4(+) + ATP = 7-cyano-7-deazaguanine + ADP + phosphate + H2O + H(+). Its pathway is purine metabolism; 7-cyano-7-deazaguanine biosynthesis. Catalyzes the ATP-dependent conversion of 7-carboxy-7-deazaguanine (CDG) to 7-cyano-7-deazaguanine (preQ(0)). The polypeptide is 7-cyano-7-deazaguanine synthase (Methanococcus vannielii (strain ATCC 35089 / DSM 1224 / JCM 13029 / OCM 148 / SB)).